A 746-amino-acid polypeptide reads, in one-letter code: MERTYQYAWIIPFLTLAVPILIGLGLLLVPPATKSIRRIWAFPSVLLLSIVMVFSTNLSIQQINGNSIYQYLWSWTINSDSSLEFGYLIDSLTSIMSILIATVGMMVLIYSDNYMSHDKGYLRFFAYMSFFNTSMLGLVISPNLIQIYIFWELVGMCSYLSIGFWFTRPSAANACQKAFVTNRVGDFGLLLGILGLYWIAGSFEFRDLFDIFNDSIDNIDNNVLNSSFAILCASLLFLGAVAKSAQFPLHVWLPDAMEGPTPISALIHAATMVAAGIFLVARLLPLLTVIPYIMNLISLIGVITVLLGATLALAQKDIKRSLAYSTMSQLGYIMLASGIGSYRAALFHSITHAYSKALLFLGSGSIIHSMEPILGYSPDKSQNMVFMGGLSKYVPITKATFLLGTLSLCGIPPLACFWSKDEILNNSWLYSPIFAIIASSTTGLTAFYMFRMYLLTFEGHLRVHFKGDTNSSLYSISIWGKEGPEVFSRNLILLSMNNNQNEKVSSFLNKNKIYQIDRDVIKMRSFSTHFVKKETFPYPHESDNTMLFPLLLLAILTLFVGSVGIRFGQGVTDFDVLSKWLIPSISMDLFHEYLNPSADWYEFAQNAIYSVSIAFFGILIANLLYGSVHSSFQNLDLINSFAKIYTKIRIFSDQALNVIYNWSYNRGYIDLYYATILTRGIRGLAESTHFFDQRIIDGVTNAVGITNFFVGEAIKYMAGGRISSYLFFSLSSLSIALILVYFYLYF.

16 helical membrane passes run 9–29, 39–59, 89–109, 125–145, 147–167, 185–205, 222–242, 261–281, 283–303, 330–350, 357–377, 399–419, 428–448, 545–565, 608–628, and 726–746; these read WIIP…LLLV, IWAF…TNLS, IDSL…MVLI, FAYM…PNLI, IYIF…FWFT, GDFG…SFEF, NVLN…GAVA, TPIS…FLVA, LLPL…IGVI, LGYI…FHSI, ALLF…LGYS, ATFL…CFWS, WLYS…TAFY, TMLF…SVGI, IYSV…YGSV, and LFFS…YLYF.

Belongs to the complex I subunit 5 family. In terms of assembly, NDH is composed of at least 16 different subunits, 5 of which are encoded in the nucleus.

The protein resides in the plastid. Its subcellular location is the chloroplast thylakoid membrane. The enzyme catalyses a plastoquinone + NADH + (n+1) H(+)(in) = a plastoquinol + NAD(+) + n H(+)(out). It catalyses the reaction a plastoquinone + NADPH + (n+1) H(+)(in) = a plastoquinol + NADP(+) + n H(+)(out). NDH shuttles electrons from NAD(P)H:plastoquinone, via FMN and iron-sulfur (Fe-S) centers, to quinones in the photosynthetic chain and possibly in a chloroplast respiratory chain. The immediate electron acceptor for the enzyme in this species is believed to be plastoquinone. Couples the redox reaction to proton translocation, and thus conserves the redox energy in a proton gradient. The polypeptide is NAD(P)H-quinone oxidoreductase subunit 5, chloroplastic (ndhF) (Amborella trichopoda).